The primary structure comprises 152 residues: Syntaxin-8A (152 aa).

Positions 1–14 (MNNNNNFNSNFNSN) are enriched in low complexity. Residues 1–22 (MNNNNNFNSNFNSNRISSTQPY) are disordered. Residues 1-131 (MNNNNNFNSN…LTQQSKTTGY (131 aa)) lie on the Cytoplasmic side of the membrane. The 63-residue stretch at 60–122 (KRDMEEQDKM…RNTTKNLITL (63 aa)) folds into the t-SNARE coiled-coil homology domain. A helical; Anchor for type IV membrane protein transmembrane segment spans residues 132–152 (CSAICFLLLVLLVIIILASVL).

It belongs to the syntaxin family. Component of the SNARE complex composed of syn7A, syn8A, vamp7A and vti1A.

The protein localises to the endosome membrane. Its function is as follows. Involved in the targeting and/or fusion of transport vesicles to their target membrane during transport of proteins from the early endosome to the lysosome. Required for fusion of late endosomes with lysosomes and homotypic lysosomal fusion. In Dictyostelium discoideum (Social amoeba), this protein is Syntaxin-8A.